A 177-amino-acid polypeptide reads, in one-letter code: ATP synthase subunit delta (177 aa).

It belongs to the ATPase delta chain family. F-type ATPases have 2 components, F(1) - the catalytic core - and F(0) - the membrane proton channel. F(1) has five subunits: alpha(3), beta(3), gamma(1), delta(1), epsilon(1). F(0) has three main subunits: a(1), b(2) and c(10-14). The alpha and beta chains form an alternating ring which encloses part of the gamma chain. F(1) is attached to F(0) by a central stalk formed by the gamma and epsilon chains, while a peripheral stalk is formed by the delta and b chains.

The protein resides in the cell inner membrane. In terms of biological role, f(1)F(0) ATP synthase produces ATP from ADP in the presence of a proton or sodium gradient. F-type ATPases consist of two structural domains, F(1) containing the extramembraneous catalytic core and F(0) containing the membrane proton channel, linked together by a central stalk and a peripheral stalk. During catalysis, ATP synthesis in the catalytic domain of F(1) is coupled via a rotary mechanism of the central stalk subunits to proton translocation. Functionally, this protein is part of the stalk that links CF(0) to CF(1). It either transmits conformational changes from CF(0) to CF(1) or is implicated in proton conduction. The protein is ATP synthase subunit delta of Tolumonas auensis (strain DSM 9187 / NBRC 110442 / TA 4).